Reading from the N-terminus, the 329-residue chain is Taste receptor type 2 member 134 (329 aa).

Over 1–27 (MRCSLRGCVQGRGGKSGVSLSKFSPKK) the chain is Extracellular. The helical transmembrane segment at 28–48 (MSFFFIFMVIFCIQSLVALLQ) threads the bilayer. Residues 49 to 68 (NGFLATVLGREWVRSQGLPA) lie on the Cytoplasmic side of the membrane. A helical transmembrane segment spans residues 69-89 (GDMIVACLAASRFCLHGVAIV). Residues 90 to 121 (NNFLTFVKLWSQKIYFSVLWDFVNTVNFWCTT) lie on the Extracellular side of the membrane. Residues 122–142 (WLAIFYCVKISSFSHPIFFWI) form a helical membrane-spanning segment. Topologically, residues 143–153 (KWRISRSVPRL) are cytoplasmic. A helical transmembrane segment spans residues 154 to 174 (LLGSLVIGGLSAVSSATGNTI). Over 175–201 (AFQMTACENYTLAYRTRAFYAYYFRCH) the chain is Extracellular. Asn183 carries N-linked (GlcNAc...) asparagine glycosylation. A helical membrane pass occupies residues 202-222 (AMLMWIIPFFLFLLSVILLMF). The Cytoplasmic portion of the chain corresponds to 223-251 (SLYRHLEHMRYRRPWSHDYSTQAHTMALK). A helical transmembrane segment spans residues 252–272 (SLAFFLVFYTSYVLFLVISVT). Over 273–282 (RVVNVHSSWH) the chain is Extracellular. The helical transmembrane segment at 283 to 303 (WAWEVITYMGILLHSTILTLS) threads the bilayer. Residues 304 to 329 (NPKMRKALKIKFPDLCVARSQDKRRG) lie on the Cytoplasmic side of the membrane.

This sequence belongs to the G-protein coupled receptor T2R family. In terms of tissue distribution, expressed in tongue and gastrointestinal tract.

Its subcellular location is the membrane. Functionally, putative taste receptor which may play a role in the perception of bitterness. The protein is Taste receptor type 2 member 134 of Rattus norvegicus (Rat).